The sequence spans 527 residues: Mitochondrial substrate carrier family protein V (527 aa).

The segment covering 1-14 (MNSSDFKKSFKEST) has biased composition (basic and acidic residues). The segment at 1-29 (MNSSDFKKSFKESTENNSNTYRPSKTLNT) is disordered. Residues 1-132 (MNSSDFKKSF…VSKKSISKEN (132 aa)) are Mitochondrial intermembrane-facing. A compositionally biased stretch (polar residues) spans 15–29 (ENNSNTYRPSKTLNT). Solcar repeat units follow at residues 130-220 (KENV…CKKH), 253-345 (MTVP…FKII), and 430-519 (VNMI…CKDL). The chain crosses the membrane as a helical span at residues 133 to 153 (VNYLVSGSIAGAISRSATAGF). The Mitochondrial matrix segment spans residues 154–187 (ERLTIIQQVQGMSQNLSQGYVGCIAAMKEMVKRE). The chain crosses the membrane as a helical span at residues 188-208 (GFKSIWKGNGANIVKVSPNSG). The Mitochondrial intermembrane segment spans residues 209-258 (IRFLTYEFCKKHFLDNSSNHPSSSSIENGIDGNGVGCGSGSEMKMTVPQT). A helical membrane pass occupies residues 259 to 279 (MFSGAMAGLTSTFFTYPLDVV). Over 280-324 (RIRLSLQGSCSNDYAAHRYNGITHSFFKIHKDEGVKGLYKGLGTS) the chain is Mitochondrial matrix. Residues 325–345 (IASIVPWVSISFATYEGFKII) form a helical membrane-spanning segment. Topologically, residues 346-435 (CKKMILNYQI…LKKGVNMICD (90 aa)) are mitochondrial intermembrane. A helical transmembrane segment spans residues 436 to 456 (FVCGALSGAVTMTVCYPLDVL). The Mitochondrial matrix segment spans residues 457-487 (RRRMMIQGIGGNKVLYKNGWDATKKILSNEG). A helical membrane pass occupies residues 488 to 508 (LVAFYHGIIPAYFKVVPTVAI). The Mitochondrial intermembrane segment spans residues 509-527 (SFAVYEICKDLGSNKYQQK).

Belongs to the mitochondrial carrier (TC 2.A.29) family.

Its subcellular location is the mitochondrion inner membrane. Mitochondrial solute carriers shuttle metabolites, nucleotides, and cofactors through the mitochondrial inner membrane. In Dictyostelium discoideum (Social amoeba), this protein is Mitochondrial substrate carrier family protein V (mcfV).